The primary structure comprises 127 residues: Protein ApaG (127 aa).

One can recognise an ApaG domain in the interval Asp3–His127.

The sequence is that of Protein ApaG from Dechloromonas aromatica (strain RCB).